The primary structure comprises 426 residues: Glutamate-1-semialdehyde 2,1-aminomutase (426 aa).

Lys-265 is subject to N6-(pyridoxal phosphate)lysine.

It belongs to the class-III pyridoxal-phosphate-dependent aminotransferase family. HemL subfamily. As to quaternary structure, homodimer. The cofactor is pyridoxal 5'-phosphate.

Its subcellular location is the cytoplasm. It catalyses the reaction (S)-4-amino-5-oxopentanoate = 5-aminolevulinate. The protein operates within porphyrin-containing compound metabolism; protoporphyrin-IX biosynthesis; 5-aminolevulinate from L-glutamyl-tRNA(Glu): step 2/2. This chain is Glutamate-1-semialdehyde 2,1-aminomutase, found in Alcanivorax borkumensis (strain ATCC 700651 / DSM 11573 / NCIMB 13689 / SK2).